Consider the following 271-residue polypeptide: uncharacterized protein (271 aa).

A disordered region spans residues 233–261 (VEPDPNRFSEPVDQPTLVEEGKEARRTER). The segment covering 251–261 (EEGKEARRTER) has biased composition (basic and acidic residues).

Its function is as follows. May be involved in swimming motility. This is an uncharacterized protein from Haloferax volcanii (strain ATCC 29605 / DSM 3757 / JCM 8879 / NBRC 14742 / NCIMB 2012 / VKM B-1768 / DS2) (Halobacterium volcanii).